Reading from the N-terminus, the 141-residue chain is MKKDNNIINFVNFPKQHVPLLKIAAATVLKSEKIKRYQVNFIMVDDKEIRKLNTKYRKIKRITDVISFLVVPEFFMGDIYISKTRSQEQAKEYSNTWQQELAYLVIHGLLHLCGYTDYDAVNKTKMFTKQDKIFKCLFYRL.

Zn(2+) is bound by residues histidine 107, histidine 111, and aspartate 117.

This sequence belongs to the endoribonuclease YbeY family. Zn(2+) is required as a cofactor.

Its subcellular location is the cytoplasm. Single strand-specific metallo-endoribonuclease involved in late-stage 70S ribosome quality control and in maturation of the 3' terminus of the 16S rRNA. The protein is Endoribonuclease YbeY of Endomicrobium trichonymphae.